Reading from the N-terminus, the 332-residue chain is Glycerol-3-phosphate dehydrogenase [NAD(P)+] (332 aa).

Residues Trp-11, Arg-30, and Lys-108 each contribute to the NADPH site. 3 residues coordinate sn-glycerol 3-phosphate: Lys-108, Gly-137, and Ser-139. Ala-141 lines the NADPH pocket. 5 residues coordinate sn-glycerol 3-phosphate: Lys-192, Asp-245, Ser-255, Arg-256, and Asn-257. Lys-192 functions as the Proton acceptor in the catalytic mechanism. An NADPH-binding site is contributed by Arg-256. NADPH-binding residues include Val-280 and Glu-282.

Belongs to the NAD-dependent glycerol-3-phosphate dehydrogenase family.

The protein resides in the cytoplasm. It catalyses the reaction sn-glycerol 3-phosphate + NAD(+) = dihydroxyacetone phosphate + NADH + H(+). The catalysed reaction is sn-glycerol 3-phosphate + NADP(+) = dihydroxyacetone phosphate + NADPH + H(+). The protein operates within membrane lipid metabolism; glycerophospholipid metabolism. In terms of biological role, catalyzes the reduction of the glycolytic intermediate dihydroxyacetone phosphate (DHAP) to sn-glycerol 3-phosphate (G3P), the key precursor for phospholipid synthesis. The protein is Glycerol-3-phosphate dehydrogenase [NAD(P)+] of Burkholderia cenocepacia (strain ATCC BAA-245 / DSM 16553 / LMG 16656 / NCTC 13227 / J2315 / CF5610) (Burkholderia cepacia (strain J2315)).